A 55-amino-acid polypeptide reads, in one-letter code: Large ribosomal subunit protein bL33 (55 aa).

The protein belongs to the bacterial ribosomal protein bL33 family.

The polypeptide is Large ribosomal subunit protein bL33 (Blochmanniella pennsylvanica (strain BPEN)).